Consider the following 198-residue polypeptide: Guanylate kinase (198 aa).

The Guanylate kinase-like domain occupies 8 to 188; that stretch reads GRVVVLSGPS…ACSELVSLLV (181 aa). An ATP-binding site is contributed by 15 to 22; it reads GPSAVGKS.

The protein belongs to the guanylate kinase family.

The protein localises to the cytoplasm. The catalysed reaction is GMP + ATP = GDP + ADP. Its function is as follows. Essential for recycling GMP and indirectly, cGMP. In Mycobacterium sp. (strain MCS), this protein is Guanylate kinase.